A 257-amino-acid polypeptide reads, in one-letter code: Dihydroorotate dehydrogenase B (NAD(+)), electron transfer subunit (257 aa).

Residues 2 to 102 enclose the FAD-binding FR-type domain; sequence MKQEQMTVVR…LGPLGNGFPL (101 aa). FAD contacts are provided by residues 53–56, 70–72, and 77–78; these read RPLS, IYR, and GT. Residues C221, C226, C229, and C244 each coordinate [2Fe-2S] cluster.

Belongs to the PyrK family. Heterotetramer of 2 PyrK and 2 PyrD type B subunits. The cofactor is [2Fe-2S] cluster. It depends on FAD as a cofactor.

It functions in the pathway pyrimidine metabolism; UMP biosynthesis via de novo pathway; orotate from (S)-dihydroorotate (NAD(+) route): step 1/1. In terms of biological role, responsible for channeling the electrons from the oxidation of dihydroorotate from the FMN redox center in the PyrD type B subunit to the ultimate electron acceptor NAD(+). The polypeptide is Dihydroorotate dehydrogenase B (NAD(+)), electron transfer subunit (Geobacillus sp. (strain WCH70)).